Reading from the N-terminus, the 106-residue chain is Nucleoid-associated protein Noc_2594 (106 aa).

Disordered regions lie at residues 1–20 (MKGG…SNME) and 85–106 (QSKE…KLPL). Residues 10-20 (KQAQQLQSNME) show a composition bias toward polar residues.

Belongs to the YbaB/EbfC family. As to quaternary structure, homodimer.

The protein resides in the cytoplasm. Its subcellular location is the nucleoid. In terms of biological role, binds to DNA and alters its conformation. May be involved in regulation of gene expression, nucleoid organization and DNA protection. In Nitrosococcus oceani (strain ATCC 19707 / BCRC 17464 / JCM 30415 / NCIMB 11848 / C-107), this protein is Nucleoid-associated protein Noc_2594.